A 57-amino-acid chain; its full sequence is Phospholipase A2 superbin b (57 aa).

Residues Tyr-28, Gly-30, and Gly-32 each coordinate Ca(2+). A disulfide bridge connects residues Cys-29 and Cys-45. Residue His-48 is part of the active site. Residue Asp-49 coordinates Ca(2+).

Ca(2+) is required as a cofactor. As to expression, expressed by the venom gland.

It is found in the secreted. It carries out the reaction a 1,2-diacyl-sn-glycero-3-phosphocholine + H2O = a 1-acyl-sn-glycero-3-phosphocholine + a fatty acid + H(+). Its function is as follows. Snake venom phospholipase A2 (PLA2) that inhibits collagen-induced platelet aggregation. In terms of inhibition of platelet aggregation, superbin b is more potent as superbin c, and d. PLA2 catalyzes the calcium-dependent hydrolysis of the 2-acyl groups in 3-sn-phosphoglycerides. The protein is Phospholipase A2 superbin b of Austrelaps superbus (Lowland copperhead snake).